Reading from the N-terminus, the 579-residue chain is Pre-mRNA-processing factor 17 (579 aa).

Residues 1–19 are compositionally biased toward low complexity; sequence MSAAIAALAASYGSGSGSE. 2 disordered regions span residues 1-34 and 204-237; these read MSAAIAALAASYGSGSGSESDSDSEGSRCPLPAA and DVAKPSEEEQKELDEITAKRQKKGKQEEEKPGEE. WD repeat units lie at residues 286–326, 330–369, 371–413, 416–455, 459–498, 504–545, and 548–578; these read GHTK…RCLR, GHSKAVRDICFNTAGTQFLSAAYDRYLKLWDTETGQCISR, TNRK…IVQE, RHLGAVNTIVFVDENRRFVSTSDDKSLRVWEWDIPVDFKY, PSMHSMPAVTLSPNGKWLACQSMDNQILIFGAQNRFRLNK, GHMV…LYSR, and AHDKVCIGAVWHPHETSKVITCGWDGLIKLW.

As to quaternary structure, component of the catalytic spliceosome C complexes. Component of the postcatalytic spliceosome P complex. Interacts with PPIL1; this interaction leads to CDC40 isomerization. Post-translationally, undergoes isomerization of the peptide bond between Gly-94 and Pro-95. The reaction is catalyzed by PPIL1.

The protein localises to the nucleus. It is found in the nucleus speckle. In terms of biological role, required for pre-mRNA splicing as component of the activated spliceosome. Plays an important role in embryonic brain development; this function does not require proline peptide bond isomerization. This is Pre-mRNA-processing factor 17 (Cdc40) from Mus musculus (Mouse).